The chain runs to 318 residues: L-carnitine dehydrogenase (318 aa).

14–19 provides a ligand contact to NAD(+); that stretch reads GSGVIG.

The protein belongs to the 3-hydroxyacyl-CoA dehydrogenase family. L-carnitine dehydrogenase subfamily. Homodimer.

The protein resides in the cytoplasm. It catalyses the reaction carnitine + NAD(+) = 3-dehydrocarnitine + NADH + H(+). It participates in amine and polyamine metabolism; carnitine metabolism. Functionally, catalyzes the NAD(+)-dependent oxidation of L-carnitine to 3-dehydrocarnitine. The sequence is that of L-carnitine dehydrogenase from Pseudomonas syringae pv. syringae (strain B728a).